The primary structure comprises 1081 residues: Teashirt homolog 3 (1081 aa).

Disordered regions lie at residues 141–161 and 238–257; these read PSSE…SSCG and HYRD…WSKP. Over residues 148-161 the composition is skewed to low complexity; the sequence is GSSSSSSSSSSSCG. 2 C2H2-type zinc fingers span residues 214–238 and 275–299; these read FRCK…ETGH and LKCM…KTKH. The span at 238–247 shows a compositional bias: basic and acidic residues; it reads HYRDDNHETD. Residues 325 to 364 are disordered; sequence SLELELPSSPDSTGGTPKATISDTNDALQKNSNPYITPNN. Over residues 335–364 the composition is skewed to polar residues; the sequence is DSTGGTPKATISDTNDALQKNSNPYITPNN. The C2H2-type 3; atypical zinc finger occupies 386 to 404; that stretch reads LKCMECGSSHDTLQELTAH. The segment covering 473 to 491 has biased composition (basic and acidic residues); it reads EVDKEKAVTDEKPKQKDKP. 4 disordered regions span residues 473–502, 579–604, 626–687, and 855–897; these read EVDK…DISS, NSEI…PMPK, EKMK…LAEP, and TESH…RQSN. Positions 581–603 are enriched in polar residues; it reads EIVSPTKNQTLVSPPSSQTSPMP. Residues 606 to 630 adopt a coiled-coil conformation; sequence NFHAMEELVKKVTEKVAKVEEKMKE. Serine 682 bears the Phosphoserine mark. A compositionally biased stretch (low complexity) spans 856-869; the sequence is ESHTSKSSTPSSIS. A DNA-binding region (homeobox; atypical) is located at residues 891 to 961; the sequence is RKGRQSNWNP…NVKYQLRRTG (71 aa). C2H2-type zinc fingers lie at residues 976-998 and 1041-1064; these read FFCN…LESH and YQCK…SKTH.

This sequence belongs to the teashirt C2H2-type zinc-finger protein family. As to quaternary structure, interacts (via homeobox domain) with APBB1 (via PID domain 1). Interacts (via N-terminus) with HDAC1 and HDAC2; the interaction is direct. Found in a trimeric complex with APBB1 and HDAC1; the interaction between HDAC1 and APBB1 is mediated by TSHZ3. Expressed in brain; strongly reduced in post-mortem elderly subjects with Alzheimer disease. Expressed in the fetal neocortex.

The protein localises to the nucleus. It is found in the cell projection. It localises to the growth cone. Its function is as follows. Transcriptional regulator involved in developmental processes. Functions in association with APBB1, SET and HDAC factors as a transcriptional repressor, that inhibits the expression of CASP4. TSHZ3-mediated transcription repression involves the recruitment of histone deacetylases HDAC1 and HDAC2. Associates with chromatin in a region surrounding the CASP4 transcriptional start site(s). Regulates the development of neurons involved in both respiratory rhythm and airflow control. Promotes maintenance of nucleus ambiguus (nA) motoneurons, which govern upper airway function, and establishes a respiratory rhythm generator (RRG) activity compatible with survival at birth. Involved in the differentiation of the proximal uretic smooth muscle cells during developmental processes. Involved in the up-regulation of myocardin, that directs the expression of smooth muscle cells in the proximal ureter. Involved in the modulation of glutamatergic synaptic transmission and long-term synaptic potentiation. In Homo sapiens (Human), this protein is Teashirt homolog 3 (TSHZ3).